The sequence spans 194 residues: Protein PHLOEM PROTEIN 2-LIKE A2 (194 aa).

The chain crosses the membrane as a helical span at residues 49–71 (VTFVFFCFFKISLNSAYLYTLYS).

As to expression, vascular tissues, specifically in phloem companion cell-sieve element complexes.

It is found in the membrane. This Arabidopsis thaliana (Mouse-ear cress) protein is Protein PHLOEM PROTEIN 2-LIKE A2 (PP2A2).